Consider the following 59-residue polypeptide: Large ribosomal subunit protein bL32 (59 aa).

Belongs to the bacterial ribosomal protein bL32 family.

The polypeptide is Large ribosomal subunit protein bL32 (Mycoplasma capricolum subsp. capricolum (strain California kid / ATCC 27343 / NCTC 10154)).